A 350-amino-acid polypeptide reads, in one-letter code: FAD:protein FMN transferase (350 aa).

The first 19 residues, 1-19 (MDMTFFRAALLGACVLLSG), serve as a signal peptide directing secretion. A lipid anchor (N-palmitoyl cysteine) is attached at cysteine 20. Residue cysteine 20 is the site of S-diacylglycerol cysteine attachment. FAD is bound by residues methionine 41, tryptophan 78, 119–121 (AMD), and aspartate 181. Threonine 184 is a binding site for Mg(2+). The FAD site is built by glutamate 187 and isoleucine 272. Mg(2+) contacts are provided by aspartate 298, aspartate 301, and threonine 302.

This sequence belongs to the ApbE family. Requires Mg(2+) as cofactor.

It is found in the cell inner membrane. It carries out the reaction L-threonyl-[protein] + FAD = FMN-L-threonyl-[protein] + AMP + H(+). Flavin transferase that catalyzes the transfer of the FMN moiety of FAD and its covalent binding to the hydroxyl group of a threonine residue in a target flavoprotein such as NqrB and NqrC, two subunits of the NQR complex. This Klebsiella pneumoniae (strain 342) protein is FAD:protein FMN transferase.